The sequence spans 89 residues: ATP synthase subunit c, sodium ion specific (89 aa).

2 helical membrane-spanning segments follow: residues 9 to 29 (VVLA…IGPG) and 68 to 88 (GIYS…VGLL).

Belongs to the ATPase C chain family. As to quaternary structure, F-type ATPases have 2 components, F(1) - the catalytic core - and F(0) - the membrane sodium channel. F(1) has five subunits: alpha(3), beta(3), gamma(1), delta(1), epsilon(1). F(0) has three main subunits: a(1), b(2) and c(10-14). The alpha and beta chains form an alternating ring which encloses part of the gamma chain. F(1) is attached to F(0) by a central stalk formed by the gamma and epsilon chains, while a peripheral stalk is formed by the delta and b chains.

The protein resides in the cell membrane. Its function is as follows. F(1)F(0) ATP synthase produces ATP from ADP in the presence of a proton or sodium gradient. F-type ATPases consist of two structural domains, F(1) containing the extramembraneous catalytic core and F(0) containing the membrane sodium channel, linked together by a central stalk and a peripheral stalk. During catalysis, ATP synthesis in the catalytic domain of F(1) is coupled via a rotary mechanism of the central stalk subunits to sodium translocation. Functionally, key component of the F(0) channel; it plays a direct role in translocation across the membrane. A homomeric c-ring of between 10-14 subunits forms the central stalk rotor element with the F(1) delta and epsilon subunits. In Propionigenium modestum, this protein is ATP synthase subunit c, sodium ion specific (atpE).